Reading from the N-terminus, the 2587-residue chain is Protein KINKY POLLEN (2587 aa).

Positions 1–27 (MAAFLVMFIFTIALFVALLWVFFKSLP) are cleaved as a signal peptide. Residue Asn-71 is glycosylated (N-linked (GlcNAc...) asparagine). The disordered stretch occupies residues 103–124 (PSHSSKGPRKPKTRKSSSGGKG). A compositionally biased stretch (basic residues) spans 108 to 117 (KGPRKPKTRK). Residues Asn-262, Asn-281, and Asn-485 are each glycosylated (N-linked (GlcNAc...) asparagine). The segment at 270–290 (SKGEVIDSSSGNTTSEKPPKQ) is disordered. Over residues 276-285 (DSSSGNTTSE) the composition is skewed to polar residues. Residues 589–611 (GSSSKNKQEKGAHRSKPPSGRGT) form a disordered region. The stretch at 691–716 (TLNKEIQSTQVELETAKAIYQEFLEE) forms a coiled coil. The disordered stretch occupies residues 784–814 (QHGNRNPEEASTVTGDKQKEEPTTTPNSLDK). 4 N-linked (GlcNAc...) asparagine glycosylation sites follow: Asn-1155, Asn-1250, Asn-1281, and Asn-1486. Disordered regions lie at residues 1571-1608 (HCSKPAQMSRTSSLSGSTDRVTSDNGTSTSDGTEKHPD), 1646-1673 (VDARSTKEKQSEPEENSHSDPSDDDGYN), and 1729-1797 (EGNQ…PEEE). Over residues 1576 to 1590 (AQMSRTSSLSGSTDR) the composition is skewed to polar residues. N-linked (GlcNAc...) asparagine glycosylation is present at Asn-1595. A compositionally biased stretch (basic and acidic residues) spans 1646-1666 (VDARSTKEKQSEPEENSHSDP). The segment covering 1746–1760 (KQPSTGSGNLASQSK) has biased composition (polar residues). 5 N-linked (GlcNAc...) asparagine glycosylation sites follow: Asn-1861, Asn-1951, Asn-1981, Asn-2036, and Asn-2278. Positions 2006–2036 (IEEVELAKIELEAKERDRMMLLDDIRKLTQN) form a coiled coil. Positions 2274–2287 (QGSKNQSLKSSTIR) are enriched in polar residues. Disordered regions lie at residues 2274-2299 (QGSKNQSLKSSTIRGSGRELRRTSSF), 2319-2360 (SMEH…KKSR), and 2442-2469 (KDDIGLRDKDESGRTDQESGAWVKRPGD). Basic and acidic residues-rich tracts occupy residues 2289-2299 (SGRELRRTSSF), 2322-2336 (HQGESSKGKLKDSKT), 2343-2359 (SVHEEKKGEKSLEDKKS), and 2442-2458 (KDDIGLRDKDESGRTDQ). N-linked (GlcNAc...) asparagine glycosylation is found at Asn-2513 and Asn-2544. Residues 2533-2587 (IRRHSKKFQNQNTTKGSKKTQLSPTLSPPKEEDQYESDSSSGSSAYEEFLDQNQI) are disordered. Residues 2540 to 2557 (FQNQNTTKGSKKTQLSPT) are compositionally biased toward polar residues. Over residues 2569-2579 (SDSSSGSSAYE) the composition is skewed to low complexity.

This sequence belongs to the SABRE family. As to expression, mostly expressed in pollen and roots, especially in tip-growing cells, but also present in seedlings, stems, leaves, buds, flowers, siliques and seeds.

The protein resides in the secreted. Its subcellular location is the golgi apparatus. Its function is as follows. May be involved in membrane trafficking. Required for tip growth in pollen tubes and root hairs. The protein is Protein KINKY POLLEN of Arabidopsis thaliana (Mouse-ear cress).